Here is a 135-residue protein sequence, read N- to C-terminus: Transcriptional activator protein (135 aa).

The Nuclear localization signal motif lies at 17–32 (KIQHHIAKKRQVRRRR). A zinc finger lies at 37–54 (CGCSYYIHLDCINHGFTH). The transactivation stretch occupies residues 120–135 (HLDDLTVSDWSFFKSL).

This sequence belongs to the geminiviridae transcriptional activator protein family. In terms of assembly, monomer. Homodimer. Homooligomer. Self-interaction correlates with nuclear localization and efficient activation of transcription. Monomers suppress local silencing by interacting with and inactivating host adenosine kinase 2 (ADK2) in the cytoplasm. Interacts with and inhibits host SNF1 kinase. Binds to ssDNA. May interact with host RPS27A. Phosphorylated.

Its subcellular location is the host nucleus. It localises to the host cytoplasm. Multifunctional protein that modulates host antiviral defenses and promotes host attractiveness to insect vectors. Acts as a suppressor of RNA-mediated gene silencing, also known as post-transcriptional gene silencing (PTGS), a mechanism of plant viral defense that limits the accumulation of viral RNAs. TrAP suppresses the host RNA silencing by inhibiting adenosine kinase 2 (ADK2), a kinase involved in a general methylation pathway. Also suppresses the host basal defense by interacting with and inhibiting SNF1 kinase, a key regulator of cell metabolism implicated in innate antiviral defense. Its function is as follows. Inhibits signal transduction by the phytohormone jasmonate, making the infected plant more attractive to aphids, which are the second host to play a role as a dissemination vector. Acts by binding to ubiquitin precursor RPS27A, thereby preventing ubiquitin degradation of JAZ. The protein is Transcriptional activator protein of Capsicum annuum (Capsicum pepper).